A 316-amino-acid polypeptide reads, in one-letter code: Cell division protein FtsQ (316 aa).

Residues M1–P34 form a disordered region. Residues M1–R61 are Cytoplasmic-facing. The helical transmembrane segment at L62–W80 threads the bilayer. Over P81–I316 the chain is Periplasmic. A POTRA domain is found at F97–R165. The interval P295 to I316 is disordered.

It belongs to the FtsQ/DivIB family. FtsQ subfamily.

The protein resides in the cell inner membrane. Its function is as follows. Essential cell division protein. The protein is Cell division protein FtsQ of Zymomonas mobilis subsp. mobilis (strain ATCC 31821 / ZM4 / CP4).